The chain runs to 653 residues: DNA mismatch repair protein MutL (653 aa).

The segment at 368–413 (EVSQVAEPEGKTDITNKKETETKEKAEKKENKQEEKEEKTSAPEYV) is disordered. Over residues 375 to 408 (PEGKTDITNKKETETKEKAEKKENKQEEKEEKTS) the composition is skewed to basic and acidic residues.

Belongs to the DNA mismatch repair MutL/HexB family.

Its function is as follows. This protein is involved in the repair of mismatches in DNA. It is required for dam-dependent methyl-directed DNA mismatch repair. May act as a 'molecular matchmaker', a protein that promotes the formation of a stable complex between two or more DNA-binding proteins in an ATP-dependent manner without itself being part of a final effector complex. This chain is DNA mismatch repair protein MutL, found in Lactobacillus delbrueckii subsp. bulgaricus (strain ATCC 11842 / DSM 20081 / BCRC 10696 / JCM 1002 / NBRC 13953 / NCIMB 11778 / NCTC 12712 / WDCM 00102 / Lb 14).